Reading from the N-terminus, the 445-residue chain is rRNA methyltransferase 3B, mitochondrial (445 aa).

The transit peptide at 1–37 (MATRIASMRFRCALFQSALTLGRNEVNIKRYVRRRRA) directs the protein to the mitochondrion. Disordered stretches follow at residues 52–90 (EGVISQTSERSSQHNNDITRNTDKSSIENPVSPNNSQPV) and 311–334 (HSTTMGKHNDNTTPQKHRRPSDYG). Composition is skewed to polar residues over residues 54-70 (VISQTSERSSQHNNDIT), 78-90 (IENPVSPNNSQPV), and 311-324 (HSTTMGKHNDNTTP). S-adenosyl-L-methionine-binding residues include Gly-387, Ile-411, and Leu-420.

The protein belongs to the class IV-like SAM-binding methyltransferase superfamily. RNA methyltransferase TrmH family.

The protein localises to the mitochondrion. The catalysed reaction is a uridine in rRNA + S-adenosyl-L-methionine = a 2'-O-methyluridine in rRNA + S-adenosyl-L-homocysteine + H(+). Functionally, S-adenosyl-L-methionine-dependent 2'-O-ribose methyltransferase that catalyzes the formation of 2'-O-methylguanosine at position 1485 (Gm1485) in the mitochondrial large subunit ribosomal RNA (mtLSU rRNA), a conserved modification in the peptidyl transferase domain of the mtLSU rRNA. Also required for formation of 2'-O-methyluridine at position 1484 (Um1484) mediated by MRM2. The protein is rRNA methyltransferase 3B, mitochondrial of Danio rerio (Zebrafish).